The following is a 744-amino-acid chain: Cell division cycle protein 27 homolog B (744 aa).

The stretch at 101–134 (AAGHYLLGLIYKYTDRRKNAAQQFKQSLTIDPLL) is one TPR 1 repeat. The span at 180–199 (NEERNSTSTKNTSSEDYSPR) shows a compositional bias: polar residues. Disordered stretches follow at residues 180–218 (NEER…NFHS) and 359–390 (ENMD…NDQE). Over residues 363–374 (EGVRGEPFDDSR) the composition is skewed to basic and acidic residues. Over residues 375–387 (PNTASTTGSMASN) the composition is skewed to polar residues. TPR repeat units follow at residues 450 to 483 (GWVL…SPYC), 518 to 551 (PQSW…NPRF), 553 to 585 (YAHT…DTRH), 587 to 619 (NAWY…NPSS), 621 to 653 (VIMS…DRKN), 655 to 687 (LPMY…APSE), and 688 to 721 (SSVY…KPPA).

Belongs to the APC3/CDC27 family. The APC/C is composed of at least 10 subunits. Can homodimerize. Interacts with APC2, APC10, FZR2 and FZR3. Interacts with PANS1. Interacts with SAMBA. As to expression, specifically expressed in dividing and elongating cells.

It is found in the nucleus. The protein operates within protein modification; protein ubiquitination. Component of the anaphase promoting complex/cyclosome (APC/C), a cell cycle-regulated E3 ubiquitin-protein ligase complex that controls progression through mitosis and the G1 phase of the cell cycle. The APC/C complex controls several key steps in the cell cycle by mediating ubiquitination and subsequent degradation of target proteins such as cyclins. The APC/C complex is required for the female gametophyte development and is involved in several aspect of development by controlling cell division and cell elongation. Involved in the control of endoreduplication. Functionally redundant with CDC27A in the control of gametophyte development. In Arabidopsis thaliana (Mouse-ear cress), this protein is Cell division cycle protein 27 homolog B (CDC27B).